The sequence spans 391 residues: UPF0229 protein BCB4264_A0587 (391 aa).

Positions 1–16 (MGEENQPNYTISQENW) are enriched in polar residues. Disordered stretches follow at residues 1–31 (MGEE…RHQE) and 80–117 (HVGQ…GDAA). Residues 21 to 31 (KGYDDQQRHQE) are compositionally biased toward basic and acidic residues. Residues 98–115 (GSGGQKQKGPGKGQGAGD) are compositionally biased toward gly residues.

Belongs to the UPF0229 family.

The protein is UPF0229 protein BCB4264_A0587 of Bacillus cereus (strain B4264).